Reading from the N-terminus, the 166-residue chain is NAD(P)H-quinone oxidoreductase subunit I, chloroplastic (166 aa).

4Fe-4S ferredoxin-type domains are found at residues glycine 55–lysine 84 and leucine 95–glutamate 124. Cysteine 64, cysteine 67, cysteine 70, cysteine 74, cysteine 104, cysteine 107, cysteine 110, and cysteine 114 together coordinate [4Fe-4S] cluster.

This sequence belongs to the complex I 23 kDa subunit family. As to quaternary structure, NDH is composed of at least 16 different subunits, 5 of which are encoded in the nucleus. [4Fe-4S] cluster serves as cofactor.

The protein resides in the plastid. It is found in the chloroplast thylakoid membrane. The catalysed reaction is a plastoquinone + NADH + (n+1) H(+)(in) = a plastoquinol + NAD(+) + n H(+)(out). The enzyme catalyses a plastoquinone + NADPH + (n+1) H(+)(in) = a plastoquinol + NADP(+) + n H(+)(out). In terms of biological role, NDH shuttles electrons from NAD(P)H:plastoquinone, via FMN and iron-sulfur (Fe-S) centers, to quinones in the photosynthetic chain and possibly in a chloroplast respiratory chain. The immediate electron acceptor for the enzyme in this species is believed to be plastoquinone. Couples the redox reaction to proton translocation, and thus conserves the redox energy in a proton gradient. In Ambrosia trifida (Giant ragweed), this protein is NAD(P)H-quinone oxidoreductase subunit I, chloroplastic.